A 162-amino-acid polypeptide reads, in one-letter code: Phosphopantetheine adenylyltransferase (162 aa).

Thr-10 lines the substrate pocket. ATP is bound by residues 10 to 11 and His-18; that span reads TF. Residues Lys-42, Met-74, and Arg-88 each coordinate substrate. ATP-binding positions include 89–91, Glu-99, and 124–130; these read GLR and YAFLSST.

This sequence belongs to the bacterial CoaD family. As to quaternary structure, homohexamer. Requires Mg(2+) as cofactor.

The protein resides in the cytoplasm. It catalyses the reaction (R)-4'-phosphopantetheine + ATP + H(+) = 3'-dephospho-CoA + diphosphate. It functions in the pathway cofactor biosynthesis; coenzyme A biosynthesis; CoA from (R)-pantothenate: step 4/5. Its function is as follows. Reversibly transfers an adenylyl group from ATP to 4'-phosphopantetheine, yielding dephospho-CoA (dPCoA) and pyrophosphate. The protein is Phosphopantetheine adenylyltransferase of Aliivibrio fischeri (strain ATCC 700601 / ES114) (Vibrio fischeri).